We begin with the raw amino-acid sequence, 162 residues long: Xanthine-guanine phosphoribosyltransferase (162 aa).

Residues 41 to 42 (RG) and 92 to 100 (DDLVDTGNT) each bind 5-phospho-alpha-D-ribose 1-diphosphate. Aspartate 93 is a Mg(2+) binding site. Guanine is bound by residues aspartate 96 and isoleucine 139. 2 residues coordinate xanthine: aspartate 96 and isoleucine 139. Residues 96–100 (DTGNT) and 138–139 (WI) contribute to the GMP site.

The protein belongs to the purine/pyrimidine phosphoribosyltransferase family. XGPT subfamily. Homotetramer. Mg(2+) is required as a cofactor.

Its subcellular location is the cell inner membrane. The enzyme catalyses GMP + diphosphate = guanine + 5-phospho-alpha-D-ribose 1-diphosphate. It catalyses the reaction XMP + diphosphate = xanthine + 5-phospho-alpha-D-ribose 1-diphosphate. The catalysed reaction is IMP + diphosphate = hypoxanthine + 5-phospho-alpha-D-ribose 1-diphosphate. The protein operates within purine metabolism; GMP biosynthesis via salvage pathway; GMP from guanine: step 1/1. Its pathway is purine metabolism; XMP biosynthesis via salvage pathway; XMP from xanthine: step 1/1. Purine salvage pathway enzyme that catalyzes the transfer of the ribosyl-5-phosphate group from 5-phospho-alpha-D-ribose 1-diphosphate (PRPP) to the N9 position of the 6-oxopurines guanine and xanthine to form the corresponding ribonucleotides GMP (guanosine 5'-monophosphate) and XMP (xanthosine 5'-monophosphate), with the release of PPi. To a lesser extent, also acts on hypoxanthine. In Chromohalobacter salexigens (strain ATCC BAA-138 / DSM 3043 / CIP 106854 / NCIMB 13768 / 1H11), this protein is Xanthine-guanine phosphoribosyltransferase.